Reading from the N-terminus, the 332-residue chain is N-arachidonyl glycine receptor (332 aa).

Residues M1–L26 are Extracellular-facing. Residues V27–F47 traverse the membrane as a helical segment. Over S48 to T56 the chain is Cytoplasmic. The helical transmembrane segment at V57–F77 threads the bilayer. Residues R78–R95 lie on the Extracellular side of the membrane. A disulfide bridge connects residues C94 and C173. The chain crosses the membrane as a helical span at residues I96–S116. Residues A117–A138 are Cytoplasmic-facing. Residues V139 to L159 traverse the membrane as a helical segment. At Y160–R192 the chain is on the extracellular side. N-linked (GlcNAc...) asparagine glycosylation occurs at N189. A helical transmembrane segment spans residues L193–H213. The Cytoplasmic portion of the chain corresponds to S214–R233. Residues I234 to A254 traverse the membrane as a helical segment. Residues F255–G269 are Extracellular-facing. The helical transmembrane segment at A270–V290 threads the bilayer. At S291 to L332 the chain is on the cytoplasmic side. Phosphoserine is present on S323.

This sequence belongs to the G-protein coupled receptor 1 family.

The protein localises to the cell membrane. Its subcellular location is the cytoplasmic vesicle membrane. Functionally, g protein-coupled receptor (GPCR) that plays a role in diverse physiological processes particularly within the immune and nervous systems. Becomes active when triggered by various endogenous ligands including endocannabinoid N-arachidonyl glycine (NAGly), delta-9-tetrahydrocannabinol or resolvin D2/RvD2 derived from the omega-3 fatty acid docosahexaenoic acid (DHA). Upon RvD2 binding, facilitates the resolution of inflammation, aiding in tissue repair and homeostasis. Mechanistically, RvD2 ligation initiates Galphas protein coupling, activation of cAMP-PKA signaling pathway and phosphorylation of STAT3, leading to RvD2-stimulated macrophage phagocytosis. Mediates NAGly-induced process of reorganization of actin filaments and induction of acrosomal exocytosis. Activation by N-arachidonoyl glycine (NAGly) can also induce apoptosis in macrophages. Plays a role in homeostasis of CD8+ subsets of intraepithelial lymphocytes (IELs) (CD8alphaalpha and CD8alphabeta IELs) in small intestine by supporting preferential migration of CD8alphaalpha T-cells to intraepithelial compartment over lamina propria compartment, and by mediating their reconstitution into small intestine after bone marrow transplant. Participates also in hypotensive responses, mediating reduction in intraocular and blood pressure. This is N-arachidonyl glycine receptor (GPR18) from Bos taurus (Bovine).